Reading from the N-terminus, the 336-residue chain is tRNA N6-adenosine threonylcarbamoyltransferase (336 aa).

His-114 and His-118 together coordinate Fe cation. Substrate-binding positions include 136–140 (LVSGG), Asp-169, Gly-182, Asp-186, and Asn-275. Asp-301 is a Fe cation binding site.

Belongs to the KAE1 / TsaD family. It depends on Fe(2+) as a cofactor.

Its subcellular location is the cytoplasm. The catalysed reaction is L-threonylcarbamoyladenylate + adenosine(37) in tRNA = N(6)-L-threonylcarbamoyladenosine(37) in tRNA + AMP + H(+). Functionally, required for the formation of a threonylcarbamoyl group on adenosine at position 37 (t(6)A37) in tRNAs that read codons beginning with adenine. Is involved in the transfer of the threonylcarbamoyl moiety of threonylcarbamoyl-AMP (TC-AMP) to the N6 group of A37, together with TsaE and TsaB. TsaD likely plays a direct catalytic role in this reaction. In Streptococcus pneumoniae (strain Taiwan19F-14), this protein is tRNA N6-adenosine threonylcarbamoyltransferase.